Reading from the N-terminus, the 1562-residue chain is Pikromycin polyketide synthase component PikAIII (1562 aa).

A Ketosynthase family 3 (KS3) domain is found at 34–464 (HEPVAIVGMA…GTNAHVVLEE (431 aa)). Residues 37–1475 (VAIVGMACRL…TPAALAAHLH (1439 aa)) form a module 5 region. Cysteine 209 acts as the Acyl-thioester intermediate; for beta-ketoacyl synthase activity in catalysis. Catalysis depends on for beta-ketoacyl synthase activity residues histidine 344 and histidine 384. The tract at residues 565–866 (FVFPGQGTQW…GGQERLVTSL (302 aa)) is acyltransferase. The active-site Acyl-ester intermediate; for acyltransferase activity is serine 655. The tract at residues 1116–1293 (GTVLITGGTG…ATSVAWGLWA (178 aa)) is beta-ketoacyl reductase. Residues 1124–1127 (TGAL), 1147–1150 (SRSG), 1176–1177 (DV), lysine 1226, and 1248–1249 (YS) each bind NADP(+). Tyrosine 1263 serves as the catalytic Acyl-ester intermediate; for beta-ketoacyl reductase activity. The 76-residue stretch at 1403 to 1478 (PALLTLVRTH…ALAAHLHEAY (76 aa)) folds into the Carrier domain. Serine 1438 bears the O-(pantetheine 4'-phosphoryl)serine mark. The tract at residues 1519-1548 (GIEPEPGSGGSDGGAADPGAEPEASIDDLD) is disordered. The span at 1532–1541 (GAADPGAEPE) shows a compositional bias: low complexity.

As to quaternary structure, homodimer. Pikromycin PKS consists of a combination of multimodular (PikAI and PikAII) and monomodular (PikAIII and PikAIV) polypeptides each coding for a functional synthase subunit which participates in 1 (monomodular) or 2 (multimodular) of the six FAS-like elongation steps required for formation of the polyketide. Module 1, 2, 3, 4, 5, and 6 participating in biosynthesis steps 1, 2, 3, 4, 5, and 6, respectively. Pantetheine 4'-phosphate serves as cofactor.

It carries out the reaction 5 (S)-methylmalonyl-CoA + malonyl-CoA + 5 NADPH + 11 H(+) = 10-deoxymethynolide + 6 CO2 + 5 NADP(+) + 6 CoA + 2 H2O. It catalyses the reaction 6 (S)-methylmalonyl-CoA + malonyl-CoA + 5 NADPH + 12 H(+) = narbonolide + 7 CO2 + 5 NADP(+) + 7 CoA + 2 H2O. It participates in antibiotic biosynthesis. In terms of biological role, involved in the biosynthesis of 12- and 14-membered ring macrolactone antibiotics such as methymycin and neomethymycin, and pikromycin and narbomycin, respectively. Component of the pikromycin PKS which catalyzes the biosynthesis of both precursors 10-deoxymethynolide (12-membered ring macrolactone) and narbonolide (14-membered ring macrolactone). Chain elongation through PikAI, PikAII and PikAIII followed by thioesterase catalyzed termination results in the production of 10-deoxymethynolide, while continued elongation through PikAIV, followed by thioesterase (TE) catalyzed cyclization results in the biosynthesis of the narbonolide. This Streptomyces venezuelae protein is Pikromycin polyketide synthase component PikAIII.